We begin with the raw amino-acid sequence, 536 residues long: Apoptosis inhibitor 5 homolog (536 aa).

The tract at residues 462-536 is disordered; the sequence is ITFGEKAAAN…GYRNRRFNKY (75 aa). Basic and acidic residues predominate over residues 472–487; sequence GKDKDQEPEKKSRPSN. Positions 498-507 are enriched in polar residues; the sequence is KYSNKVNQSY. The segment covering 516-528 has biased composition (gly residues); that stretch reads RGGGGGGGSGGGY.

The protein belongs to the API5 family.

It localises to the nucleus. Functionally, antiapoptotic factor. Also known to efficiently suppress E2F1-induced apoptosis. This chain is Apoptosis inhibitor 5 homolog, found in Drosophila melanogaster (Fruit fly).